A 337-amino-acid polypeptide reads, in one-letter code: Fructose-1,6-bisphosphatase class 1 (337 aa).

Glu-89, Asp-112, Leu-114, and Asp-115 together coordinate Mg(2+). Residues 115 to 118 (DGSS), Asn-208, Tyr-241, and Lys-271 contribute to the substrate site. Mg(2+) is bound at residue Glu-277.

The protein belongs to the FBPase class 1 family. As to quaternary structure, homotetramer. Requires Mg(2+) as cofactor.

Its subcellular location is the cytoplasm. It catalyses the reaction beta-D-fructose 1,6-bisphosphate + H2O = beta-D-fructose 6-phosphate + phosphate. Its pathway is carbohydrate biosynthesis; gluconeogenesis. In Yersinia pestis bv. Antiqua (strain Antiqua), this protein is Fructose-1,6-bisphosphatase class 1.